The primary structure comprises 750 residues: Polyribonucleotide nucleotidyltransferase (750 aa).

The Mg(2+) site is built by Asp519 and Asp525. A KH domain is found at 585–644; the sequence is PRVIAVKIPVDKIGEVIGPKGKMINQIQEDTGADISIEDDGTVYIGATNGPSADAARSAI. Residues 656-728 enclose the S1 motif domain; it reads GERYLGTVVK…DRGKLSLSPV (73 aa). Residues 725 to 750 are disordered; the sequence is LSPVVAEEEGAASEDAPAEAAEESAE. A compositionally biased stretch (acidic residues) spans 730 to 750; the sequence is AEEEGAASEDAPAEAAEESAE.

It belongs to the polyribonucleotide nucleotidyltransferase family. The cofactor is Mg(2+).

The protein resides in the cytoplasm. The catalysed reaction is RNA(n+1) + phosphate = RNA(n) + a ribonucleoside 5'-diphosphate. Involved in mRNA degradation. Catalyzes the phosphorolysis of single-stranded polyribonucleotides processively in the 3'- to 5'-direction. This Paenarthrobacter aurescens (strain TC1) protein is Polyribonucleotide nucleotidyltransferase.